A 270-amino-acid chain; its full sequence is Tetraspanin-17 (270 aa).

Residues 1 to 19 (MPGKHQQFQDPEVGCCGKY) are Cytoplasmic-facing. The chain crosses the membrane as a helical span at residues 20–40 (FLFGFNIVFWVLGALFLAIGL). Over 41 to 63 (WAWGEKGVLSNISGLTDLGGLDP) the chain is Extracellular. N-linked (GlcNAc...) asparagine glycosylation occurs at Asn-51. The chain crosses the membrane as a helical span at residues 64–84 (VWLFVVIGGIMSVLGFAGCIG). The Cytoplasmic portion of the chain corresponds to 85-94 (ALRENTFLLK). A helical transmembrane segment spans residues 95–115 (FFSVFLGLIFFLELAAGILAF). Over 116–234 (VFKDWIRDQL…GQFEKWLQDN (119 aa)) the chain is Extracellular. Cystine bridges form between Cys-155–Cys-223, Cys-156–Cys-188, Cys-172–Cys-182, and Cys-189–Cys-202. Asn-171 carries N-linked (GlcNAc...) asparagine glycosylation. A helical transmembrane segment spans residues 235-255 (LIVVAGVLVAIALLQICGICL). Residues 256–270 (AQNLVSDIEAVKANW) lie on the Cytoplasmic side of the membrane.

The protein belongs to the tetraspanin (TM4SF) family. Interacts with ADAM10; the interaction influences ADAM10 substrate specificity, endocytosis and turnover.

Its subcellular location is the cell membrane. Functionally, part of TspanC8 subgroup, composed of 6 members that interact with the transmembrane metalloprotease ADAM10. This interaction is required for ADAM10 exit from the endoplasmic reticulum and for enzymatic maturation and trafficking to the cell surface as well as substrate specificity. Different TspanC8/ADAM10 complexes have distinct substrates. Seems to regulate VE-cadherin expression in endothelial cells probably through interaction with ADAM10, promoting leukocyte transmigration. This chain is Tetraspanin-17 (Tspan17), found in Rattus norvegicus (Rat).